The sequence spans 188 residues: Peptide deformylase (188 aa).

Fe cation contacts are provided by C94 and H136. Residue E137 is part of the active site. Residue H140 participates in Fe cation binding.

Belongs to the polypeptide deformylase family. Fe(2+) is required as a cofactor.

The enzyme catalyses N-terminal N-formyl-L-methionyl-[peptide] + H2O = N-terminal L-methionyl-[peptide] + formate. Removes the formyl group from the N-terminal Met of newly synthesized proteins. Requires at least a dipeptide for an efficient rate of reaction. N-terminal L-methionine is a prerequisite for activity but the enzyme has broad specificity at other positions. The polypeptide is Peptide deformylase (Chlorobium phaeobacteroides (strain DSM 266 / SMG 266 / 2430)).